Here is a 1057-residue protein sequence, read N- to C-terminus: Protein transport protein Sec16B (1057 aa).

A compositionally biased stretch (polar residues) spans 1 to 15 (MELWVPQTQGRTTGP). Residues 1 to 86 (MELWVPQTQG…VSGADYLKGS (86 aa)) form a disordered region. A compositionally biased stretch (basic and acidic residues) spans 45 to 63 (QDTHKNSKPQQDPRDDHQQ). Serine 70, serine 137, serine 161, and serine 185 each carry phosphoserine. A disordered region spans residues 185 to 220 (SAFGLEQPGEFFPESGAQKQKPSLTSKSNLLQQHES). Positions 201 to 213 (AQKQKPSLTSKSN) are enriched in polar residues. The residue at position 245 (serine 245) is a Phosphoserine. The interval 263–708 (APMRFYVPHV…KHKELEQTRT (446 aa)) is central conserved domain (CCD); required for localization to endoplasmic reticulum exit sites. Basic and acidic residues predominate over residues 704 to 715 (EQTRTGDLRDPD). 2 disordered regions span residues 704 to 778 (EQTR…TYSE) and 849 to 1057 (AVIS…SQPC). The segment covering 737-764 (GQQNYSEDSEYSSALWPTSEQTSLTNPT) has biased composition (polar residues). The residue at position 856 (threonine 856) is a Phosphothreonine. Phosphoserine is present on residues serine 866, serine 869, serine 872, and serine 881. The segment covering 883–903 (GADKPPHPDASQKEKLRDGKN) has biased composition (basic and acidic residues). Positions 906 to 926 (SSGFGWFSWFRSKPASSVSTS) are enriched in low complexity. Residues 927–938 (GDEDSVDSSDSE) show a composition bias toward acidic residues. Over residues 990-999 (EGVGIGGFSG) the composition is skewed to gly residues. Residues 1028 to 1043 (NPSQVPQLPTASSLNR) show a composition bias toward polar residues.

This sequence belongs to the SEC16 family. In terms of assembly, SEC16A and SEC16B are each present in multiple copies in a heteromeric complex. Interacts with TFG. Interacts with SEC13. Liver, kidney, heart, spleen and brain.

Its subcellular location is the endoplasmic reticulum membrane. The protein resides in the golgi apparatus membrane. Plays a role in the organization of the endoplasmic reticulum exit sites (ERES), also known as transitional endoplasmic reticulum (tER). Required for secretory cargo traffic from the endoplasmic reticulum to the Golgi apparatus. Involved in peroxisome biogenesis. Regulates the transport of peroxisomal biogenesis factors PEX3 and PEX16 from the ER to peroxisomes. The sequence is that of Protein transport protein Sec16B (Sec16b) from Rattus norvegicus (Rat).